Here is a 276-residue protein sequence, read N- to C-terminus: Large ribosomal subunit protein uL2 (276 aa).

The segment at 219-276 is disordered; sequence TVRGSAMNPNDHPHGGGEGRSPIGRPSPVTPWGKPALGYKTRKKNKHSDKFIVTGRKR.

It belongs to the universal ribosomal protein uL2 family. As to quaternary structure, part of the 50S ribosomal subunit. Forms a bridge to the 30S subunit in the 70S ribosome.

Its function is as follows. One of the primary rRNA binding proteins. Required for association of the 30S and 50S subunits to form the 70S ribosome, for tRNA binding and peptide bond formation. It has been suggested to have peptidyltransferase activity; this is somewhat controversial. Makes several contacts with the 16S rRNA in the 70S ribosome. This chain is Large ribosomal subunit protein uL2, found in Alkaliphilus metalliredigens (strain QYMF).